A 557-amino-acid chain; its full sequence is ABC1 family protein MCP2 homolog (557 aa).

The N-terminal 33 residues, 1–33 (MFSRFSWPRITRCFRSYPKKKSSCISFTHHARE), are a transit peptide targeting the mitochondrion. At 34 to 39 (HTNFKK) the chain is on the mitochondrial matrix side. Residues 40–56 (PAVVGASITLMASVALV) traverse the membrane as a helical segment. At 57–557 (DFDPVKHAGV…NYFYYKHMYL (501 aa)) the chain is on the mitochondrial intermembrane side.

It belongs to the protein kinase superfamily. ADCK protein kinase family.

It localises to the mitochondrion inner membrane. Involved in mitochondrial lipid homeostasis. This chain is ABC1 family protein MCP2 homolog, found in Schizosaccharomyces pombe (strain 972 / ATCC 24843) (Fission yeast).